Here is a 350-residue protein sequence, read N- to C-terminus: Dihydroorotase (350 aa).

2 residues coordinate Zn(2+): histidine 17 and histidine 19. Residues 19-21 (HFR) and asparagine 45 each bind substrate. Zn(2+) is bound by residues lysine 103, histidine 140, and histidine 178. Lysine 103 carries the post-translational modification N6-carboxylysine. A substrate-binding site is contributed by histidine 140. Leucine 223 contacts substrate. Position 251 (aspartate 251) interacts with Zn(2+). Residue aspartate 251 is part of the active site. The substrate site is built by histidine 255 and alanine 267.

It belongs to the metallo-dependent hydrolases superfamily. DHOase family. Class II DHOase subfamily. Homodimer. Zn(2+) serves as cofactor.

The enzyme catalyses (S)-dihydroorotate + H2O = N-carbamoyl-L-aspartate + H(+). It functions in the pathway pyrimidine metabolism; UMP biosynthesis via de novo pathway; (S)-dihydroorotate from bicarbonate: step 3/3. Catalyzes the reversible cyclization of carbamoyl aspartate to dihydroorotate. This Photorhabdus laumondii subsp. laumondii (strain DSM 15139 / CIP 105565 / TT01) (Photorhabdus luminescens subsp. laumondii) protein is Dihydroorotase.